Here is a 222-residue protein sequence, read N- to C-terminus: Sortase A (222 aa).

The Cytoplasmic portion of the chain corresponds to 1–7 (MLKKTIA). A helical membrane pass occupies residues 8–28 (IIILIIGLLLIFSPFIKNGIV). The Extracellular portion of the chain corresponds to 29–222 (KYMSGHETIE…ELENKYFPSK (194 aa)). The active-site Proton donor/acceptor is the His-127. Cys-188 serves as the catalytic Acyl-thioester intermediate.

Belongs to the bacterial sortase family. Class A subfamily.

It localises to the cell membrane. With respect to regulation, activity is enhanced by Zn(2+) and strongly enhanced by Ca(2+). Inhibited by chalcone, a precursor of several flavonoids, which blocks the SrtA active site. Transpeptidase that anchors surface proteins to the cell wall. Recognizes and modifies its substrate by proteolytic cleavage of a C-terminal sorting signal. Following cleavage, a covalent intermediate is formed via a thioester bond between the sortase and its substrate, which is then transferred and covalently attached to the cell wall. This sortase recognizes a Leu-Pro-x-Thr-Gly (LPXTG) motif, which is cleaved by the sortase between the threonine and glycine residues. Involved in pathogenesis. May regulate the rate of synthesis and/or the stability of a subset of LPXTG proteins. Not involved in cell wall-anchoring of Hbp2 (SvpA) or Hbp1. The protein is Sortase A of Listeria monocytogenes serovar 1/2a (strain ATCC BAA-679 / EGD-e).